The following is a 232-amino-acid chain: Large ribosomal subunit protein uL1 (232 aa).

The protein belongs to the universal ribosomal protein uL1 family. In terms of assembly, part of the 50S ribosomal subunit.

Binds directly to 23S rRNA. The L1 stalk is quite mobile in the ribosome, and is involved in E site tRNA release. In terms of biological role, protein L1 is also a translational repressor protein, it controls the translation of the L11 operon by binding to its mRNA. The polypeptide is Large ribosomal subunit protein uL1 (Burkholderia cenocepacia (strain ATCC BAA-245 / DSM 16553 / LMG 16656 / NCTC 13227 / J2315 / CF5610) (Burkholderia cepacia (strain J2315))).